Here is a 261-residue protein sequence, read N- to C-terminus: RING finger protein 208 (261 aa).

The segment at 83–106 is disordered; sequence PALEGAPHTPPLPRRPRKGSSELG. A Phosphoserine modification is found at Ser-102. The segment at 143–190 adopts an RING-type zinc-finger fold; that stretch reads CPTCGHSYNVTQRRPRVLSCLHSVCEQCLQILYESCPKYKFISCPTCR.

The protein is RING finger protein 208 (RNF208) of Homo sapiens (Human).